The sequence spans 323 residues: Synaptonemal complex central element protein 1 (323 aa).

Positions Met-1–Ala-10 are enriched in polar residues. 2 disordered regions span residues Met-1–Lys-31 and Lys-294–Lys-323. Basic and acidic residues-rich tracts occupy residues Asp-20–Lys-31 and Ser-313–Lys-323. Residues Gln-25 to Gln-290 adopt a coiled-coil conformation.

The protein belongs to the SYCE family. Homodimer. Found in a complex with SYCP1 and SYCE2. Interacts with SYCP1, SYCE2 and SYCE3. Interacts with SIX6OS1.

Its subcellular location is the nucleus. It localises to the chromosome. In terms of biological role, major component of the transverse central element of synaptonemal complexes (SCS), formed between homologous chromosomes during meiotic prophase. Requires SYCP1 in order to be incorporated into the central element. May have a role in the synaptonemal complex assembly, stabilization and recombination. This Bos taurus (Bovine) protein is Synaptonemal complex central element protein 1 (SYCE1).